Consider the following 431-residue polypeptide: Na(+)-translocating NADH-quinone reductase subunit F (431 aa).

A helical membrane pass occupies residues 9–29; that stretch reads FICIASLIFCAIGVILAGVIL. The region spanning 39-133 is the 2Fe-2S ferredoxin-type domain; that stretch reads HPCKLKINDN…DMSLEIEERY (95 aa). Positions 76, 82, 85, and 117 each coordinate [2Fe-2S] cluster. The 151-residue stretch at 136–286 folds into the FAD-binding FR-type domain; sequence ASSWEGTVIS…SGPYGESFMK (151 aa). The segment at 289–413 is catalytic; sequence DRPLIFLIGG…PLHNSSILKL (125 aa).

It belongs to the NqrF family. Composed of six subunits; NqrA, NqrB, NqrC, NqrD, NqrE and NqrF. The cofactor is [2Fe-2S] cluster. FAD is required as a cofactor.

It is found in the cell inner membrane. It carries out the reaction a ubiquinone + n Na(+)(in) + NADH + H(+) = a ubiquinol + n Na(+)(out) + NAD(+). In terms of biological role, NQR complex catalyzes the reduction of ubiquinone-1 to ubiquinol by two successive reactions, coupled with the transport of Na(+) ions from the cytoplasm to the periplasm. The first step is catalyzed by NqrF, which accepts electrons from NADH and reduces ubiquinone-1 to ubisemiquinone by a one-electron transfer pathway. This Chlamydia pneumoniae (Chlamydophila pneumoniae) protein is Na(+)-translocating NADH-quinone reductase subunit F.